Here is a 158-residue protein sequence, read N- to C-terminus: Na(+)/H(+) antiporter subunit E (158 aa).

Helical transmembrane passes span 22–41 and 54–76; these read YTAV…LFVL and IWAI…IDVI.

Belongs to the CPA3 antiporters (TC 2.A.63) subunit E family. Forms a heterooligomeric complex that consists of seven subunits: MrpA, MrpB, MrpC, MrpD, MrpE, MrpF and MrpG.

The protein localises to the cell membrane. Its function is as follows. Mnh complex is a Na(+)Li(+)/H(+) antiporter involved in Na(+) and/or Li(+) excretion and Na(+) resistance. Na(+)/H(+) antiport consumes a transmembrane electrical potential, and is thus inferred to be electrogenic. Does not transport K(+), Ca(2+) or Mg(2+). Mrp complex is a Na(+)/H(+) antiporter involved in Na(+) excretion and Na(+) resistance. The polypeptide is Na(+)/H(+) antiporter subunit E (mrpE) (Alkalihalophilus pseudofirmus (strain ATCC BAA-2126 / JCM 17055 / OF4) (Bacillus pseudofirmus)).